A 323-amino-acid polypeptide reads, in one-letter code: Mycothiol acetyltransferase (323 aa).

N-acetyltransferase domains follow at residues Leu5–Arg145 and Val168–Arg323. Position 36 (Glu36) interacts with 1D-myo-inositol 2-(L-cysteinylamino)-2-deoxy-alpha-D-glucopyranoside. Acetyl-CoA is bound at residue Val83–Val85. Residues Glu195, Lys236, and Glu252 each contribute to the 1D-myo-inositol 2-(L-cysteinylamino)-2-deoxy-alpha-D-glucopyranoside site. Residues Val256–Val258 and Gln263–Arg269 contribute to the acetyl-CoA site. Tyr290 contributes to the 1D-myo-inositol 2-(L-cysteinylamino)-2-deoxy-alpha-D-glucopyranoside binding site. Position 295–300 (Asn295–Gln300) interacts with acetyl-CoA.

This sequence belongs to the acetyltransferase family. MshD subfamily. In terms of assembly, monomer.

It carries out the reaction 1D-myo-inositol 2-(L-cysteinylamino)-2-deoxy-alpha-D-glucopyranoside + acetyl-CoA = mycothiol + CoA + H(+). Its function is as follows. Catalyzes the transfer of acetyl from acetyl-CoA to desacetylmycothiol (Cys-GlcN-Ins) to form mycothiol. In Thermobifida fusca (strain YX), this protein is Mycothiol acetyltransferase.